The following is a 317-amino-acid chain: sn-1-specific diacylglycerol lipase ABHD11 (317 aa).

The N-terminal 20 residues, Met1–Gly20, are a transit peptide targeting the mitochondrion. Positions Pro69 to Pro304 constitute an AB hydrolase-1 domain. Catalysis depends on charge relay system residues Ser142, Glu238, and His297.

The protein belongs to the AB hydrolase superfamily. Phosphorylated.

The protein resides in the mitochondrion. The protein localises to the mitochondrion matrix. It catalyses the reaction 1-octadecanoyl-2-(5Z,8Z,11Z,14Z-eicosatetraenoyl)-sn-glycerol + H2O = 2-(5Z,8Z,11Z,14Z-eicosatetraenoyl)-glycerol + octadecanoate + H(+). It carries out the reaction a 1,2-diacyl-sn-glycerol + H2O = a 2-acylglycerol + a fatty acid + H(+). The catalysed reaction is a 1,3-diacyl-sn-glycerol + H2O = a 1-acyl-sn-glycerol + a fatty acid + H(+). The enzyme catalyses 1-octadecanoyl-2-(9Z-octadecenoyl)-sn-glycerol + H2O = 2-(9Z-octadecenoyl)-glycerol + octadecanoate + H(+). It catalyses the reaction 1-octadecanoyl-2-(4Z,7Z,10Z,13Z,16Z,19Z-docosahexaenoyl)-sn-glycerol + H2O = 2-(4Z,7Z,10Z,13Z,16Z,19Z-docosahexaenoyl)-glycerol + octadecanoate + H(+). It carries out the reaction 1,2-didecanoylglycerol + H2O = decanoylglycerol + decanoate + H(+). In terms of biological role, catalyzes the hydrolysis of diacylglycerol in vitro and may function as a key regulator in lipid metabolism, namely by regulating the intracellular levels of diacylglycerol. 1,2-diacyl-sn-glycerols are the preferred substrate over 1,3-diacyl-sn-glycerols. The enzyme hydrolyzes stearate in preference to palmitate from the sn-1 position of 1,2-diacyl-sn-glycerols. This is sn-1-specific diacylglycerol lipase ABHD11 from Danio rerio (Zebrafish).